A 354-amino-acid chain; its full sequence is Protein OVEREXPRESSOR OF CATIONIC PEROXIDASE 3 (354 aa).

The short motif at 63-70 (NRKGFVSS) is the Nuclear localization signal 1 element. 2 disordered regions span residues 65-98 (KGFVSSSSSSPKKNKKKSLDGADNGGGEEEEDPF) and 151-186 (TGDVDVDVDNDDDDNDDDDNDDDDDDSEEDERPTKL). Residues 154–181 (VDVDVDNDDDDNDDDDNDDDDDDSEEDE) show a composition bias toward acidic residues. The short motif at 191 to 198 (LKRLAYAL) is the Nuclear localization signal 2 element. The disordered stretch occupies residues 243 to 264 (KPPVAAPENSSPDPSPVESLSA). Positions 286-345 (RWSAQKRVKKAHIETLEKVYRRSKRPTNAVVSSIVQVTNLPRKRVLKWFEDKRAEDGVPD) form a DNA-binding region, homeobox. A Nuclear localization signal 3 motif is present at residues 293–300 (VKKAHIET).

The protein resides in the nucleus. Its function is as follows. May modulate chromatin structure by regulation of nucleosome assembly/disassembly. Homeodomain transcription factor that mediates jasmonic acid (JA)-mediated COI1-dependent and abscisic acid (ABA)-mediated PMR4-dependent resistance to infection by necrotrophic fungal pathogens (e.g. B.cinerea and P.cucumerina) and bacterial pathogens (e.g. P.syringae DC3000); this resistance involves at least callose deposition. Required for the P.fluorescens WCS417r-triggered JA-dependent induced systemic resistance (ISR) against both P.syringae DC3000 and H.arabidopsidis. Negative regulator of the ABA-dependent drought resistance. This chain is Protein OVEREXPRESSOR OF CATIONIC PEROXIDASE 3, found in Arabidopsis thaliana (Mouse-ear cress).